The chain runs to 212 residues: Ribosomal RNA small subunit methyltransferase G (212 aa).

Residues G80, L85, 131–132 (AE), and R146 each bind S-adenosyl-L-methionine.

Belongs to the methyltransferase superfamily. RNA methyltransferase RsmG family.

It is found in the cytoplasm. It catalyses the reaction guanosine(527) in 16S rRNA + S-adenosyl-L-methionine = N(7)-methylguanosine(527) in 16S rRNA + S-adenosyl-L-homocysteine. Its function is as follows. Specifically methylates the N7 position of guanine in position 527 of 16S rRNA. The protein is Ribosomal RNA small subunit methyltransferase G of Xanthomonas campestris pv. campestris (strain 8004).